Reading from the N-terminus, the 107-residue chain is U1-lycotoxin-Ls1m (107 aa).

The N-terminal stretch at 1–20 (MMKVLVVVALLVTLISYSSS) is a signal peptide. The propeptide occupies 21-41 (EGIDDLEADELLSLMANEQTR). Intrachain disulfides connect Cys-44–Cys-59, Cys-51–Cys-68, Cys-58–Cys-86, and Cys-70–Cys-84.

This sequence belongs to the neurotoxin 19 (CSTX) family. 04 (U1-Lctx) subfamily. Expressed by the venom gland.

It is found in the secreted. The sequence is that of U1-lycotoxin-Ls1m from Lycosa singoriensis (Wolf spider).